Reading from the N-terminus, the 239-residue chain is ASTQQTPAQSPTASPTVSTPVAYVDRPLTASPAQLPPLPYDAGALSKAIDAETMRIHHDRHHQTYVDNLNTALKDQPNLQNLSIEAMLRDLNAVPENIRNTIRNNAGGHLNHTIFWQIMSPDGGGQPTGAIAQAINQTFGNFESFRKQFNEAGGDRFGSGWVWLVRNAQGQLQIVSTANQDNPIMEGNYPIMGNDVWEHAYYLRYQNRRADYLNNWWNVVNWNEINRRFQAASQQQARS.

Residues A1 to T19 show a composition bias toward polar residues. The disordered stretch occupies residues A1–P20. The signal sequence occupies residues A1–A30. Residues H57, H112, D195, and H199 each contribute to the Mn(2+) site.

The protein belongs to the iron/manganese superoxide dismutase family. Homodimer. Mn(2+) is required as a cofactor.

It catalyses the reaction 2 superoxide + 2 H(+) = H2O2 + O2. Functionally, destroys superoxide anion radicals which are normally produced within the cells and which are toxic to biological systems. This is Superoxide dismutase [Mn] 3 (sodA3) from Leptolyngbya boryana (Plectonema boryanum).